Reading from the N-terminus, the 401-residue chain is Divinyl chlorophyllide a 8-vinyl-reductase, chloroplastic (401 aa).

The span at 1–10 shows a compositional bias: polar residues; it reads MATILLSSRL. The interval 1–26 is disordered; sequence MATILLSSRLPTTGTATPSPTRPAPR. The transit peptide at 1–54 directs the protein to the chloroplast; that stretch reads MATILLSSRLPTTGTATPSPTRPAPRFLSFPGTAIRRRGRGPLLASSAVSPPAP.

It is found in the plastid. The protein localises to the chloroplast. The enzyme catalyses protochlorophyllide a + NADP(+) = 3,8-divinyl protochlorophyllide a + NADPH + H(+). The protein operates within porphyrin-containing compound metabolism; chlorophyll biosynthesis. Functionally, catalyzes the conversion of divinyl chlorophyllide to monovinyl chlorophyllide. Reduces the 8-vinyl group of the tetrapyrrole to an ethyl group using NADPH as the reductant. Can use (3,8-divinyl)-chlorophyllide a (DV-Chlidea) &gt; (3,8-divinyl)-chlorophyll a (DV-Chla) &gt; (3,8-divinyl)-protochlorophyllide a (DV-Pchlidea) &gt; (3,8-divinyl)-magnesium-protoporphyrin IX monomethyl ester (DV-MPE) &gt; (3,8-divinyl)-magnesium-protoporphyrin IX (DV-Mg-Proto) as substrates. This Zea mays (Maize) protein is Divinyl chlorophyllide a 8-vinyl-reductase, chloroplastic (DVR).